A 46-amino-acid chain; its full sequence is Viscotoxin-C1 (46 aa).

Intrachain disulfides connect C3/C40, C4/C32, and C16/C26.

In terms of assembly, monomer.

The protein localises to the secreted. Thionins are small plant proteins which are toxic to animal cells. They seem to exert their toxic effect at the level of the cell membrane. Their precise function is not known. This Viscum album (European mistletoe) protein is Viscotoxin-C1.